The chain runs to 193 residues: Orotate phosphoribosyltransferase (193 aa).

114 to 122 (EDVITTGGS) contacts 5-phospho-alpha-D-ribose 1-diphosphate. Orotate is bound by residues T118 and R146.

The protein belongs to the purine/pyrimidine phosphoribosyltransferase family. PyrE subfamily. In terms of assembly, homodimer. It depends on Mg(2+) as a cofactor.

The catalysed reaction is orotidine 5'-phosphate + diphosphate = orotate + 5-phospho-alpha-D-ribose 1-diphosphate. The protein operates within pyrimidine metabolism; UMP biosynthesis via de novo pathway; UMP from orotate: step 1/2. Its function is as follows. Catalyzes the transfer of a ribosyl phosphate group from 5-phosphoribose 1-diphosphate to orotate, leading to the formation of orotidine monophosphate (OMP). The sequence is that of Orotate phosphoribosyltransferase from Chlorobaculum parvum (strain DSM 263 / NCIMB 8327) (Chlorobium vibrioforme subsp. thiosulfatophilum).